The primary structure comprises 235 residues: Cobalt transport protein CbiM (235 aa).

Transmembrane regions (helical) follow at residues 6–26, 43–63, 85–105, 108–128, 133–153, and 181–201; these read GVLPPVQCAIWFAAAAPFVVH, LLLATAGACTFLLSSIKLPSV, MAFMGLIVLIFQALLLAHGGI, LGANTFSMAIVGPWVGYGAYV, LGGPLALGIFLAMFLSDLSTY, and IFAISQIPLSVAEGILGILLF.

Belongs to the CbiM family. As to quaternary structure, forms an energy-coupling factor (ECF) transporter complex composed of an ATP-binding protein (A component, CbiO), a transmembrane protein (T component, CbiQ) and 2 possible substrate-capture proteins (S components, CbiM and CbiN) of unknown stoichimetry.

The protein localises to the cell membrane. Its pathway is cofactor biosynthesis; adenosylcobalamin biosynthesis. Functionally, part of the energy-coupling factor (ECF) transporter complex CbiMNOQ involved in cobalt import. The sequence is that of Cobalt transport protein CbiM from Propionibacterium freudenreichii subsp. shermanii (strain ATCC 9614 / DSM 4902 / CIP 103027 / NCIMB 8099 / CIRM-BIA1).